The primary structure comprises 481 residues: Protein FIZZY-RELATED 3 (481 aa).

The tract at residues 100 to 165 is disordered; it reads PAGGQGSASS…RKVPKTPHKV (66 aa). Residues 125–136 show a composition bias toward low complexity; that stretch reads SNSSPSSPFSPS. Positions 154–163 are enriched in basic residues; that stretch reads PPRKVPKTPH. WD repeat units lie at residues 172 to 209, 213 to 252, 255 to 292, 296 to 335, 338 to 380, 382 to 423, and 426 to 465; these read QDDFYLNVVDWSSQNVLAVGLGTCVYLWTASNSKVTKL, GPNDSVCSVQWTREGSYISIGTSHGQVQVWDGTQCKRVRT, GHQTRTGVLAWNSRILSSGSRDRNILQHDIRVQSDFVS, GHKSEVCGLKWSHDDRELASGGNDNQLLVWNNHSQQPILK, EHTA…QLNS, DTGS…KVAT, and GHSMRVLYLATSPDGQTIVTGAGDETLRFWNVFPSVKMQT.

The protein belongs to the WD repeat CDC20/Fizzy family. In terms of assembly, associates with the APC/C complex. Interacts with CDC20-1, CDC20-2, CYCA1-1, CYCA3-4, CYCB1-1 and CYCB1-2. Binds to GIG1 and PYM.

It participates in protein modification; protein ubiquitination. Its function is as follows. Activator protein that regulates the ubiquitin ligase activity and substrate specificity of the anaphase promoting complex/cyclosome (APC/C). The sequence is that of Protein FIZZY-RELATED 3 (FZR3) from Arabidopsis thaliana (Mouse-ear cress).